Here is a 457-residue protein sequence, read N- to C-terminus: tRNA-2-methylthio-N(6)-dimethylallyladenosine synthase (457 aa).

Positions 3 to 120 (KKVYVKTFGC…LPQMIDARRT (118 aa)) constitute an MTTase N-terminal domain. The [4Fe-4S] cluster site is built by Cys-12, Cys-49, Cys-83, Cys-157, Cys-161, and Cys-164. Residues 143 to 377 (RVEGPTAFVS…QATIEENVAR (235 aa)) form the Radical SAM core domain. Residues 380-447 (QSMVGKVERI…PHSLRGELVL (68 aa)) enclose the TRAM domain.

It belongs to the methylthiotransferase family. MiaB subfamily. As to quaternary structure, monomer. Requires [4Fe-4S] cluster as cofactor.

It is found in the cytoplasm. The enzyme catalyses N(6)-dimethylallyladenosine(37) in tRNA + (sulfur carrier)-SH + AH2 + 2 S-adenosyl-L-methionine = 2-methylsulfanyl-N(6)-dimethylallyladenosine(37) in tRNA + (sulfur carrier)-H + 5'-deoxyadenosine + L-methionine + A + S-adenosyl-L-homocysteine + 2 H(+). Functionally, catalyzes the methylthiolation of N6-(dimethylallyl)adenosine (i(6)A), leading to the formation of 2-methylthio-N6-(dimethylallyl)adenosine (ms(2)i(6)A) at position 37 in tRNAs that read codons beginning with uridine. This is tRNA-2-methylthio-N(6)-dimethylallyladenosine synthase from Burkholderia multivorans (strain ATCC 17616 / 249).